A 400-amino-acid polypeptide reads, in one-letter code: Leucine-rich repeat flightless-interacting protein 2 (400 aa).

2 disordered regions span residues 1-28 and 53-119; these read MGTP…SNID and LERQ…LSEV. Phosphoserine is present on S18. Residues 29–71 adopt a coiled-coil conformation; the sequence is REAEARLAAKRAARAEARDIRMRELERQQKELDEKSDKQYAEN. Residues 53–68 show a composition bias toward basic and acidic residues; sequence LERQQKELDEKSDKQY. Positions 73 to 102 are enriched in polar residues; sequence TRPSSRNSASATTPLSGNSSRRVSGDTSSL. A phosphoserine mark is found at S77, S80, S88, S92, and S96. A Phosphothreonine modification is found at T99. Residues S100 and S101 each carry the phosphoserine modification. Coiled-coil stretches lie at residues 106 to 202 and 245 to 393; these read DTSL…LIEK and LDVR…KANR.

The protein belongs to the LRRFIP family. As to quaternary structure, interacts with DVL3 and FLII. Weakly interacts with MYD88 in resting cells. Following LPS-stimulation, the interaction with MYD88 is rapidly enhanced; the complex gradually dissociates to basal levels after 6 hours of stimulation. Interaction with MYD88 is regulated by LPS-induced phosphorylation. In the presence of LPS, competes with FLII for MYD88-binding.

May function as activator of the canonical Wnt signaling pathway, in association with DVL3, upstream of CTNNB1/beta-catenin. Positively regulates Toll-like receptor (TLR) signaling in response to agonist probably by competing with the negative FLII regulator for MYD88-binding. In Bos taurus (Bovine), this protein is Leucine-rich repeat flightless-interacting protein 2 (LRRFIP2).